The sequence spans 96 residues: MIDREQVRKVALLARLELTPQEEEQFTTQLGSILDYVEQLNELDVSNVPPTARAIDVSNITREDNLQPYADREAILSSAPEQEGEFFKVPKILNAE.

Belongs to the GatC family. As to quaternary structure, heterotrimer of A, B and C subunits.

The catalysed reaction is L-glutamyl-tRNA(Gln) + L-glutamine + ATP + H2O = L-glutaminyl-tRNA(Gln) + L-glutamate + ADP + phosphate + H(+). The enzyme catalyses L-aspartyl-tRNA(Asn) + L-glutamine + ATP + H2O = L-asparaginyl-tRNA(Asn) + L-glutamate + ADP + phosphate + 2 H(+). In terms of biological role, allows the formation of correctly charged Asn-tRNA(Asn) or Gln-tRNA(Gln) through the transamidation of misacylated Asp-tRNA(Asn) or Glu-tRNA(Gln) in organisms which lack either or both of asparaginyl-tRNA or glutaminyl-tRNA synthetases. The reaction takes place in the presence of glutamine and ATP through an activated phospho-Asp-tRNA(Asn) or phospho-Glu-tRNA(Gln). The sequence is that of Aspartyl/glutamyl-tRNA(Asn/Gln) amidotransferase subunit C from Trichormus variabilis (strain ATCC 29413 / PCC 7937) (Anabaena variabilis).